The chain runs to 138 residues: L-ectoine synthase (138 aa).

Belongs to the ectoine synthase family.

It carries out the reaction (2S)-4-acetamido-2-aminobutanoate = L-ectoine + H2O. It participates in amine and polyamine biosynthesis; ectoine biosynthesis; L-ectoine from L-aspartate 4-semialdehyde: step 3/3. Catalyzes the circularization of gamma-N-acetyl-alpha,gamma-diaminobutyric acid (ADABA) to ectoine (1,4,5,6-tetrahydro-2-methyl-4-pyrimidine carboxylic acid), which is an excellent osmoprotectant. This is L-ectoine synthase from Vibrio cholerae serotype O1 (strain ATCC 39541 / Classical Ogawa 395 / O395).